The sequence spans 332 residues: Abscisic acid-inducible protein kinase (332 aa).

ATP-binding positions include 1–8 and Lys-23; that span reads GSGNFGVA. The region spanning 1-250 is the Protein kinase domain; that stretch reads GSGNFGVAKL…IPEIKNHPWF (250 aa). The active-site Proton acceptor is Asp-113.

The protein belongs to the protein kinase superfamily. Ser/Thr protein kinase family. Post-translationally, autophosphorylated.

The catalysed reaction is L-seryl-[protein] + ATP = O-phospho-L-seryl-[protein] + ADP + H(+). It carries out the reaction L-threonyl-[protein] + ATP = O-phospho-L-threonyl-[protein] + ADP + H(+). In terms of biological role, involved in water-stress responses. This chain is Abscisic acid-inducible protein kinase, found in Triticum aestivum (Wheat).